The following is a 199-amino-acid chain: NAD(P)H dehydrogenase (quinone) (199 aa).

The Flavodoxin-like domain occupies 4-190 (ILVLYYSMYG…AIARFQGEHV (187 aa)). Residues 10–15 (SMYGHI) and 79–81 (TRF) each bind FMN. Position 12 (tyrosine 12) interacts with NAD(+). Tryptophan 99 lines the substrate pocket. Residues 114-119 (STGTGG) and histidine 134 contribute to the FMN site.

It belongs to the WrbA family. FMN is required as a cofactor.

The catalysed reaction is a quinone + NADH + H(+) = a quinol + NAD(+). It carries out the reaction a quinone + NADPH + H(+) = a quinol + NADP(+). The chain is NAD(P)H dehydrogenase (quinone) from Yersinia enterocolitica serotype O:8 / biotype 1B (strain NCTC 13174 / 8081).